An 83-amino-acid chain; its full sequence is MENDAGEFVDLYCPRKCSASNRIIHAKDHASIQLSIAEVVPATGRMTENTKSYALCGAIRRMGESDDCIVRLTKKDGILTKNF.

This sequence belongs to the eukaryotic ribosomal protein eS21 family. As to quaternary structure, component of the 40S small ribosomal subunit.

The protein localises to the cytoplasm. The protein resides in the cytosol. It is found in the rough endoplasmic reticulum. The polypeptide is Small ribosomal subunit protein eS21 (RpS21) (Agriotes lineatus (Lined click beetle)).